Consider the following 197-residue polypeptide: Thymidine kinase (197 aa).

ATP-binding positions include 15 to 22 and 93 to 96; these read GPMFAGKT and DEVQ. The active-site Proton acceptor is Glu94. 4 residues coordinate Zn(2+): Cys150, Cys153, Cys188, and His191.

Belongs to the thymidine kinase family. Homotetramer.

The protein localises to the cytoplasm. It catalyses the reaction thymidine + ATP = dTMP + ADP + H(+). The polypeptide is Thymidine kinase (Thermococcus kodakarensis (strain ATCC BAA-918 / JCM 12380 / KOD1) (Pyrococcus kodakaraensis (strain KOD1))).